The primary structure comprises 231 residues: Adenosylcobinamide-GDP ribazoletransferase (231 aa).

The next 6 membrane-spanning stretches (helical) occupy residues 24–44 (LWAFPLVALVSSALPTLILYL), 46–66 (LPLSNLLAVLALYWTIGLLHL), 96–116 (IAGLFAVVIVLLLQVYSLQLL), 159–176 (LALGTLLYVLLGLSVVLF), 181–198 (LAGILGLLFGVHIIRISL), and 209–229 (LGATAEITRAGTLVVMALVWW).

Belongs to the CobS family. Mg(2+) serves as cofactor.

It is found in the cell membrane. The enzyme catalyses alpha-ribazole + adenosylcob(III)inamide-GDP = adenosylcob(III)alamin + GMP + H(+). It carries out the reaction alpha-ribazole 5'-phosphate + adenosylcob(III)inamide-GDP = adenosylcob(III)alamin 5'-phosphate + GMP + H(+). It functions in the pathway cofactor biosynthesis; adenosylcobalamin biosynthesis; adenosylcobalamin from cob(II)yrinate a,c-diamide: step 7/7. Functionally, joins adenosylcobinamide-GDP and alpha-ribazole to generate adenosylcobalamin (Ado-cobalamin). Also synthesizes adenosylcobalamin 5'-phosphate from adenosylcobinamide-GDP and alpha-ribazole 5'-phosphate. The sequence is that of Adenosylcobinamide-GDP ribazoletransferase from Thermococcus kodakarensis (strain ATCC BAA-918 / JCM 12380 / KOD1) (Pyrococcus kodakaraensis (strain KOD1)).